Consider the following 496-residue polypeptide: tRNA modification GTPase mss1, mitochondrial (496 aa).

Residues 1–19 (MRILNRVFLNTFQACFRRF) constitute a mitochondrion transit peptide. The 178-residue stretch at 239-416 (GINVAILGPS…FLQALSSTFE (178 aa)) folds into the TrmE-type G domain. GTP contacts are provided by residues 246–253 (GPSNAGKS), 293–297 (DTAGL), and 363–366 (NKVD).

This sequence belongs to the TRAFAC class TrmE-Era-EngA-EngB-Septin-like GTPase superfamily. TrmE GTPase family.

It localises to the mitochondrion. Functionally, GTPase involved in the 5-carboxymethylaminomethyl modification (mnm(5)s(2)U34) of the wobble uridine base in mitochondrial tRNAs. The sequence is that of tRNA modification GTPase mss1, mitochondrial (mss1) from Schizosaccharomyces pombe (strain 972 / ATCC 24843) (Fission yeast).